The sequence spans 374 residues: Eukaryotic translation initiation factor 3 subunit M (374 aa).

An N-acetylserine modification is found at serine 2. 2 positions are modified to phosphoserine: serine 2 and serine 152. A PCI domain is found at 180 to 339 (AASKVMVELL…RKVVVSHSTH (160 aa)). Lysine 254 is subject to N6-acetyllysine. Residues 344–374 (KQQWQQLYDTLNAWKQNLNKVKNSLLSLSDT) are interaction with HSV-1 and HSV-2. A Phosphoserine modification is found at serine 367.

Component of the eukaryotic translation initiation factor 3 (eIF-3) complex, which is composed of 13 subunits: EIF3A, EIF3B, EIF3C, EIF3D, EIF3E, EIF3F, EIF3G, EIF3H, EIF3I, EIF3J, EIF3K, EIF3L and EIF3M. The eIF-3 complex appears to include 3 stable modules: module A is composed of EIF3A, EIF3B, EIF3G and EIF3I; module B is composed of EIF3F, EIF3H, and EIF3M; and module C is composed of EIF3C, EIF3D, EIF3E, EIF3K and EIF3L. EIF3C of module C binds EIF3B of module A and EIF3H of module B, thereby linking the three modules. EIF3J is a labile subunit that binds to the eIF-3 complex via EIF3B. The eIF-3 complex interacts with RPS6KB1 under conditions of nutrient depletion. Mitogenic stimulation leads to binding and activation of a complex composed of MTOR and RPTOR, leading to phosphorylation and release of RPS6KB1 and binding of EIF4B to eIF-3. As to expression, broadly expressed.

Its subcellular location is the cytoplasm. In terms of biological role, component of the eukaryotic translation initiation factor 3 (eIF-3) complex, which is required for several steps in the initiation of protein synthesis. The eIF-3 complex associates with the 40S ribosome and facilitates the recruitment of eIF-1, eIF-1A, eIF-2:GTP:methionyl-tRNAi and eIF-5 to form the 43S pre-initiation complex (43S PIC). The eIF-3 complex stimulates mRNA recruitment to the 43S PIC and scanning of the mRNA for AUG recognition. The eIF-3 complex is also required for disassembly and recycling of post-termination ribosomal complexes and subsequently prevents premature joining of the 40S and 60S ribosomal subunits prior to initiation. The eIF-3 complex specifically targets and initiates translation of a subset of mRNAs involved in cell proliferation, including cell cycling, differentiation and apoptosis, and uses different modes of RNA stem-loop binding to exert either translational activation or repression. Functionally, (Microbial infection) May favor virus entry in case of infection with herpes simplex virus 1 (HSV1) or herpes simplex virus 2 (HSV2). The protein is Eukaryotic translation initiation factor 3 subunit M of Homo sapiens (Human).